A 47-amino-acid polypeptide reads, in one-letter code: Large ribosomal subunit protein eL40 (47 aa).

The protein belongs to the eukaryotic ribosomal protein eL40 family.

The polypeptide is Large ribosomal subunit protein eL40 (Methanococcus maripaludis (strain C5 / ATCC BAA-1333)).